Reading from the N-terminus, the 137-residue chain is Small ribosomal subunit protein uS12 (137 aa).

A disordered region spans residues 1–57 (MPTINQLVRKPRQSKIKKSDSPALNKGFNSKKKKFTDLNSPQKRGVCTRVGTMTPRK). Asp-102 bears the 3-methylthioaspartic acid mark. The segment at 118–137 (SGVDGRRQGRSLYGTKKPKN) is disordered.

Belongs to the universal ribosomal protein uS12 family. As to quaternary structure, part of the 30S ribosomal subunit. Contacts proteins S8 and S17. May interact with IF1 in the 30S initiation complex.

With S4 and S5 plays an important role in translational accuracy. Its function is as follows. Interacts with and stabilizes bases of the 16S rRNA that are involved in tRNA selection in the A site and with the mRNA backbone. Located at the interface of the 30S and 50S subunits, it traverses the body of the 30S subunit contacting proteins on the other side and probably holding the rRNA structure together. The combined cluster of proteins S8, S12 and S17 appears to hold together the shoulder and platform of the 30S subunit. The polypeptide is Small ribosomal subunit protein uS12 (Staphylococcus aureus (strain COL)).